The primary structure comprises 401 residues: Elongation factor Tu (401 aa).

The region spanning 10-211 (KPHLNVGTIG…ALDTFVPNPK (202 aa)) is the tr-type G domain. The interval 19–26 (GHVDHGKT) is G1. 19–26 (GHVDHGKT) contributes to the GTP binding site. Thr-26 is a Mg(2+) binding site. The segment at 62–66 (GITIA) is G2. Residues 83 to 86 (DCPG) form a G3 region. GTP-binding positions include 83 to 87 (DCPGH) and 138 to 141 (NKAD). Residues 138–141 (NKAD) are G4. Residues 179–181 (SAV) form a G5 region.

It belongs to the TRAFAC class translation factor GTPase superfamily. Classic translation factor GTPase family. EF-Tu/EF-1A subfamily. In terms of assembly, monomer.

The protein localises to the cytoplasm. The enzyme catalyses GTP + H2O = GDP + phosphate + H(+). Its function is as follows. GTP hydrolase that promotes the GTP-dependent binding of aminoacyl-tRNA to the A-site of ribosomes during protein biosynthesis. The sequence is that of Elongation factor Tu from Leptospira interrogans serogroup Icterohaemorrhagiae serovar copenhageni (strain Fiocruz L1-130).